Consider the following 493-residue polypeptide: 3-octaprenyl-4-hydroxybenzoate carboxy-lyase (493 aa).

Asn-172 contacts Mn(2+). Residues 175–177 (IYR), 189–191 (RWL), and 194–195 (RG) contribute to the prenylated FMN site. Position 238 (Glu-238) interacts with Mn(2+). The active-site Proton donor is Asp-287.

It belongs to the UbiD family. In terms of assembly, homohexamer. Requires prenylated FMN as cofactor. Mn(2+) serves as cofactor.

It localises to the cell membrane. It carries out the reaction a 4-hydroxy-3-(all-trans-polyprenyl)benzoate + H(+) = a 2-(all-trans-polyprenyl)phenol + CO2. The protein operates within cofactor biosynthesis; ubiquinone biosynthesis. Its function is as follows. Catalyzes the decarboxylation of 3-octaprenyl-4-hydroxy benzoate to 2-octaprenylphenol, an intermediate step in ubiquinone biosynthesis. In Shewanella denitrificans (strain OS217 / ATCC BAA-1090 / DSM 15013), this protein is 3-octaprenyl-4-hydroxybenzoate carboxy-lyase.